Reading from the N-terminus, the 146-residue chain is MAARPMLVVALLCAAAAAATAQQATNVRATYHYYRPAQNNWDLGAPAVSAYCATWDASKPLSWRSKYGWTAFCGPAGAHGQASCGKCLQVTNPATGAQITARIVDQCANGGLDLDWDTVFTKIDTNGIGYQQGHLNVNYQFVDCRD.

The N-terminal stretch at 1–21 (MAARPMLVVALLCAAAAAATA) is a signal peptide. At Gln-22 the chain carries Pyrrolidone carboxylic acid. Residues 22–146 (QQATNVRATY…VNYQFVDCRD (125 aa)) form the Barwin domain. Cystine bridges form between Cys-52–Cys-84, Cys-73–Cys-107, and Cys-87–Cys-144.

Monomer.

With respect to regulation, inhibited by 5'-ADP. Its function is as follows. Shows antifungal activity towards B.cinerea and towards the wheat-specific pathogenic fungi F.culmorum and F.graminearum (groups 1 and 2). Has ribonuclease activity. This Triticum aestivum (Wheat) protein is Wheatwin-1 (PR4A).